The chain runs to 870 residues: H(+)/Cl(-) exchange transporter 6 (870 aa).

The Cytoplasmic segment spans residues 1–80 (MAGCRGSVCC…KKGRRYEAVK (80 aa)). 2 consecutive transmembrane segments (helical) span residues 81–113 (WMVV…FGVV) and 128–150 (LSLL…LVLI). Positions 156 to 160 (GSGIP) match the Selectivity filter part_1 motif. Serine 157 serves as a coordination point for chloride. The helical intramembrane region spans 159-166 (IPEIKCYL). Transmembrane regions (helical) follow at residues 176-194 (RLRT…VSGG) and 200-217 (EGPM…LPQF). The Selectivity filter part_2 motif lies at 198 to 202 (GKEGP). Intramembrane regions (helical) lie at residues 241 to 253 (FVSA…VAAA) and 257 to 265 (PIGGTLFSL). A run of 3 helical transmembrane segments spans residues 277–294 (TWKV…LNFF), 335–364 (GFFV…YRMR), and 371–392 (KLVR…VFVA). N-linked (GlcNAc...) asparagine glycosylation is found at asparagine 410, asparagine 423, and asparagine 433. The next 2 helical transmembrane spans lie at 463–482 (PVTL…WTFG) and 488–512 (GLFV…KSYI). The Selectivity filter part_3 signature appears at 488–492 (GLFVP). Phenylalanine 490 provides a ligand contact to chloride. Residues 520-534 (GTFALIGAAAFLGGV) constitute an intramembrane region (helical). Positions 535–537 (VRM) form an intramembrane region, note=Loop between two helices. The segment at residues 538–549 (TISLTVILIEST) is an intramembrane region (helical). The note=Loop between two helices intramembrane region spans 550–553 (NEIT). Residues 554–572 (YGLPIMVTLMVAKWTGDLF) traverse the membrane as a helical segment. At 573 to 870 (NKGIYDVHIG…ARLRQHYQTL (298 aa)) the chain is on the cytoplasmic side. Position 577 (tyrosine 577) interacts with chloride. A CBS 1 domain is found at 606 to 663 (MEPNLTYVYPHTRIQSLVSILRTTVHHAFPVVTENRGNEKEFMKGNQLISNNIKFKKS). 631–633 (HHA) contributes to the ATP binding site. Serine 774 is subject to Phosphoserine. The region spanning 808–869 (MNPSPFTVSP…QARLRQHYQT (62 aa)) is the CBS 2 domain. An ATP-binding site is contributed by 850–853 (TRHN).

The protein belongs to the chloride channel (TC 2.A.49) family. ClC-6/CLCN6 subfamily. In terms of processing, N-glycosylated on several asparagine residues. As to expression, detected in whole brain and in hippocampus neurons (at protein level). Detected in brain, trigeminus, dorsal root ganglion, spinal cord, eye, kidney, testis, skeletal muscle, thymus and pancreas. Isoform ClC-6c is expressed only in kidney.

It localises to the late endosome membrane. The catalysed reaction is 2 chloride(in) + H(+)(out) = 2 chloride(out) + H(+)(in). Functionally, voltage-gated channel mediating the exchange of chloride ions against protons. Functions as antiporter and contributes to the acidification of the late endosome lumen. The CLC channel family contains both chloride channels and proton-coupled anion transporters that exchange chloride or another anion for protons. The presence of conserved gating glutamate residues is typical for family members that function as antiporters. The protein is H(+)/Cl(-) exchange transporter 6 of Mus musculus (Mouse).